Here is a 572-residue protein sequence, read N- to C-terminus: Methionine--tRNA ligase (572 aa).

A 'HIGH' region motif is present at residues 11–21 (PYINGIKHLGN). 4 residues coordinate Zn(2+): Cys143, Cys146, Cys156, and Cys159. The 'KMSKS' region signature appears at 346-350 (QFSTS). Position 349 (Thr349) interacts with ATP.

Belongs to the class-I aminoacyl-tRNA synthetase family. MetG type 1 subfamily. As to quaternary structure, monomer. It depends on Zn(2+) as a cofactor.

It localises to the cytoplasm. The catalysed reaction is tRNA(Met) + L-methionine + ATP = L-methionyl-tRNA(Met) + AMP + diphosphate. In terms of biological role, is required not only for elongation of protein synthesis but also for the initiation of all mRNA translation through initiator tRNA(fMet) aminoacylation. In Paracoccus denitrificans (strain Pd 1222), this protein is Methionine--tRNA ligase.